Here is a 206-residue protein sequence, read N- to C-terminus: MVKIPCRSENGQVVNIEVSDSVFDRVYNEALVHQIVTSYLANARSGTRAQKGRSEVAGSTRKQWRQKGTGRARVGAASNPLWRGGGKIFPNKPTENFTKKVNRKMYRAGMCTIFSQLLRNSKLVAISEFRVETTKTKFFLQKLKNYQLENVMIITDEVDENLYLASRNVPNIKVVEIDLIDPVSLLSYDNVVITREAVNKIESVLQ.

Residues 47 to 71 (TRAQKGRSEVAGSTRKQWRQKGTGR) form a disordered region.

The protein belongs to the universal ribosomal protein uL4 family. Part of the 50S ribosomal subunit.

One of the primary rRNA binding proteins, this protein initially binds near the 5'-end of the 23S rRNA. It is important during the early stages of 50S assembly. It makes multiple contacts with different domains of the 23S rRNA in the assembled 50S subunit and ribosome. Its function is as follows. Forms part of the polypeptide exit tunnel. This chain is Large ribosomal subunit protein uL4, found in Nitrosomonas eutropha (strain DSM 101675 / C91 / Nm57).